The sequence spans 442 residues: Pyruvate dehydrogenase complex protein X component, mitochondrial (442 aa).

Residues 1–35 (MASLAAACRVSARLAARKLQHDAAVRGFRSSAAAL) constitute a mitochondrion transit peptide. The Lipoyl-binding domain maps to 37-113 (AQNFMMPALS…QVGTRIAVVA (77 aa)). At Lys-78 the chain carries N6-lipoyllysine. The segment at 119–169 (ITKLEIPPDEGPQQLKAAAPAPAPTPAPAPASPQPQFAAPTPSPPKASTKV) is disordered. The span at 139-151 (APAPTPAPAPASP) shows a compositional bias: pro residues. Over residues 152–169 (QPQFAAPTPSPPKASTKV) the composition is skewed to low complexity. Residues 175-215 (PLLPSVHQLIKENGLDESAVSNITPTGPGGRILKGDVLAYL) form the Peripheral subunit-binding (PSBD) domain. Positions 244 to 269 (AKPVEPEKPQEEKASAPAPAPRAPEP) are disordered. Residues 245–257 (KPVEPEKPQEEKA) are compositionally biased toward basic and acidic residues. Residues 317–336 (PLPTNYQPTADELFDQVLGL) form an interaction to the E2 core region.

This sequence belongs to the 2-oxoacid dehydrogenase family. Eukaryotic pyruvate dehydrogenase (PDH) complexes are organized as a core consisting of the oligomeric dihydrolipoamide acetyl-transferase (E2), around which are arranged multiple copies of pyruvate dehydrogenase (E1), dihydrolipoamide dehydrogenase (E3) and protein X (E3BP) bound by non-covalent bonds. The Chaetomium thermophilum PDH complex contains 60 E2 units, 12 E3BP units, about 20 E1 units, and 12 or more E3 units. The units are organized in 1 E2 60-mer, 4 E3BP trimers, about 20 E1 tetramers, and a maximum of 12 E3 dimers. The E3BP trimers are bound inside the icosahedral core with tetrahedral symmetry.

The protein resides in the mitochondrion. The 10-megadalton pyruvate dehydrogenase complex contains multiple copies of three enzymatic components: pyruvate dehydrogenase (E1), dihydrolipoamide acetyltransferase (E2) and lipoamide dehydrogenase (E3) and catalyzes the overall oxidative decarboxylation of pyruvate to form acetyl-CoA and CO(2). E3BP is responsible for tethering E3 in proximity to the core, forming the entire metabolon, and the number of E3s is limited by the number of E3BPs. Within the complex, pyruvate and thiamine pyrophosphate (TPP or vitamin B1) are bound by pyruvate dehydrogenase E1 subunits alpha and beta and pyruvate is decarboxylated leading to the 2-carbon hydrohyethyl bound to TPP. The E2 component contains covalently-bound lipoyl cofactors and transfers the hydroxyethyl group from TPP to an oxidized form of covalently bound lipoamide, and the resulting acetyl group is then transferred to free coenzyme A to form acetyl-CoA and reduced dihydrolipoamide-E2. Finally, the flavoprotein dihydrolipoamide dehydrogenase (E3) re-oxidizes the lipoyl group of dihydrolipoamide-E2 to form lipoamide-E2 and NADH. A fourth subunit, E3BP, is responsible for tethering E3 in proximity to the core, forming the entire metabolon. This Chaetomium thermophilum (strain DSM 1495 / CBS 144.50 / IMI 039719) (Thermochaetoides thermophila) protein is Pyruvate dehydrogenase complex protein X component, mitochondrial.